Consider the following 182-residue polypeptide: NADH-quinone oxidoreductase subunit B 2 (182 aa).

Positions 47, 48, 113, and 142 each coordinate [4Fe-4S] cluster.

The protein belongs to the complex I 20 kDa subunit family. As to quaternary structure, NDH-1 is composed of 14 different subunits. Subunits NuoB, C, D, E, F, and G constitute the peripheral sector of the complex. It depends on [4Fe-4S] cluster as a cofactor.

Its subcellular location is the cell inner membrane. The enzyme catalyses a quinone + NADH + 5 H(+)(in) = a quinol + NAD(+) + 4 H(+)(out). Functionally, NDH-1 shuttles electrons from NADH, via FMN and iron-sulfur (Fe-S) centers, to quinones in the respiratory chain. The immediate electron acceptor for the enzyme in this species is believed to be ubiquinone. Couples the redox reaction to proton translocation (for every two electrons transferred, four hydrogen ions are translocated across the cytoplasmic membrane), and thus conserves the redox energy in a proton gradient. The chain is NADH-quinone oxidoreductase subunit B 2 from Anaeromyxobacter sp. (strain K).